An 87-amino-acid polypeptide reads, in one-letter code: Gibberellin-regulated protein 8 (87 aa).

An N-terminal signal peptide occupies residues 1–25 (MKLVVVQFFIISLLLTSSFSVLSSA).

The protein belongs to the GASA family. Post-translationally, six disulfide bonds may be present. In terms of tissue distribution, expressed in roots and developing seeds.

The protein resides in the secreted. Its function is as follows. Gibberellin-regulated protein that may function in hormonal controlled steps of development such as seed germination, flowering and seed maturation. The chain is Gibberellin-regulated protein 8 from Arabidopsis thaliana (Mouse-ear cress).